Reading from the N-terminus, the 64-residue chain is DNA-directed RNA polymerase subunit Rpo10 (64 aa).

Residues Cys7, Cys10, Cys45, and Cys46 each coordinate Zn(2+).

Belongs to the archaeal Rpo10/eukaryotic RPB10 RNA polymerase subunit family. Part of the RNA polymerase complex. Requires Zn(2+) as cofactor.

Its subcellular location is the cytoplasm. It catalyses the reaction RNA(n) + a ribonucleoside 5'-triphosphate = RNA(n+1) + diphosphate. Functionally, DNA-dependent RNA polymerase (RNAP) catalyzes the transcription of DNA into RNA using the four ribonucleoside triphosphates as substrates. The polypeptide is DNA-directed RNA polymerase subunit Rpo10 (Haloquadratum walsbyi (strain DSM 16790 / HBSQ001)).